The sequence spans 149 residues: Transcriptional repressor NrdR (149 aa).

Residues 3-34 (CPFCTAEETKVIDSRLAADGYQIRRRRECIGC) fold into a zinc finger. Positions 49–139 (PYIIKNNGNR…VYLSFDDIEE (91 aa)) constitute an ATP-cone domain.

The protein belongs to the NrdR family. It depends on Zn(2+) as a cofactor.

Its function is as follows. Negatively regulates transcription of bacterial ribonucleotide reductase nrd genes and operons by binding to NrdR-boxes. The chain is Transcriptional repressor NrdR from Haemophilus ducreyi (strain 35000HP / ATCC 700724).